A 171-amino-acid polypeptide reads, in one-letter code: Ribosome maturation factor RimM (171 aa).

The PRC barrel domain maps to 96 to 168 (EDGFYDHELE…TATITPPEGL (73 aa)).

The protein belongs to the RimM family. Binds ribosomal protein uS19.

It localises to the cytoplasm. Its function is as follows. An accessory protein needed during the final step in the assembly of 30S ribosomal subunit, possibly for assembly of the head region. Essential for efficient processing of 16S rRNA. May be needed both before and after RbfA during the maturation of 16S rRNA. It has affinity for free ribosomal 30S subunits but not for 70S ribosomes. The sequence is that of Ribosome maturation factor RimM from Corynebacterium glutamicum (strain ATCC 13032 / DSM 20300 / JCM 1318 / BCRC 11384 / CCUG 27702 / LMG 3730 / NBRC 12168 / NCIMB 10025 / NRRL B-2784 / 534).